Consider the following 264-residue polypeptide: Apolipoprotein A-I (264 aa).

The signal sequence occupies residues 1–18 (MKAVVLAVALVFLTGSQA). 2 repeat units span residues 67 to 88 (LNLL…ERLG) and 89 to 110 (PLTR…QEMN). Positions 67–264 (LNLLENWDTL…DKARETLTAQ (198 aa)) are 10 X approximate tandem repeats. Met-109 is modified (methionine sulfoxide). The stretch at 111–121 (KDLEEVKQNVQ) is one 3; half-length repeat. 3 repeat units span residues 122–143 (PYLD…QRVA), 144–165 (PLGA…GKLS), and 166–187 (PVAE…TQLA). The 7; truncated repeat unit spans residues 188 to 207 (PHSDKLRESLAQRLAELKSN). Copy 8 of the repeat occupies 208-229 (PTLNEYHTRAKTHLNTFGEKAR). A 9; half-length repeat occupies 230-240 (PALEDLRHTLI). Repeat 10 spans residues 241 to 264 (PILDTLKTKVKSVIDKARETLTAQ).

This sequence belongs to the apolipoprotein A1/A4/E family. Homodimer. Interacts with APOA1BP and CLU. Component of a sperm activating protein complex (SPAP), consisting of APOA1, an immunoglobulin heavy chain, an immunoglobulin light chain and albumin. Interacts with NDRG1. Interacts with SCGB3A2. Interacts with NAXE and YJEFN3. Post-translationally, glycosylated. In terms of processing, palmitoylated. Phosphorylation sites are present in the extracellular medium.

The protein localises to the secreted. Its function is as follows. Participates in the reverse transport of cholesterol from tissues to the liver for excretion by promoting cholesterol efflux from tissues and by acting as a cofactor for the lecithin cholesterol acyltransferase (LCAT). As part of the SPAP complex, activates spermatozoa motility. This chain is Apolipoprotein A-I (Apoa1), found in Mus pahari (Gairdner's shrew-mouse).